The sequence spans 520 residues: Maturase K (520 aa).

The protein belongs to the intron maturase 2 family. MatK subfamily.

It is found in the plastid. It localises to the chloroplast. Functionally, usually encoded in the trnK tRNA gene intron. Probably assists in splicing its own and other chloroplast group II introns. The protein is Maturase K of Iris cristata (Dwarf crested iris).